Consider the following 168-residue polypeptide: MSTDSILTTVPIQWLSVDSPVLPDEVLDWLMELGSMTRRFEQYCNSVRIIPFRECFITEEQLSDENERLLTGQRYWLREIVLCGDNIPWLLGRTLIPETTLTGPDESLVDLGTVPLGRYLFSGNKLTRDYIHVGQQGNRWARRSLLRLSGKPLLLTEVFLPESPVYKR.

Substrate-binding residues include methionine 36, arginine 78, leucine 116, and glutamate 157.

This sequence belongs to the UbiC family. In terms of assembly, monomer.

The protein resides in the cytoplasm. It carries out the reaction chorismate = 4-hydroxybenzoate + pyruvate. The protein operates within cofactor biosynthesis; ubiquinone biosynthesis. Its function is as follows. Removes the pyruvyl group from chorismate, with concomitant aromatization of the ring, to provide 4-hydroxybenzoate (4HB) for the ubiquinone pathway. This chain is Chorismate pyruvate-lyase, found in Photorhabdus laumondii subsp. laumondii (strain DSM 15139 / CIP 105565 / TT01) (Photorhabdus luminescens subsp. laumondii).